A 270-amino-acid chain; its full sequence is Monocyte to macrophage differentiation factor 2 (270 aa).

Over 1–38 (MFAPRLLDFQKTKYARFMNHRVPAHKRYQPTEYEHAAN) the chain is Cytoplasmic. Residues 39 to 59 (CATHAFWIIPSILGSSNLYFL) form a helical membrane-spanning segment. At 60–65 (SDDDWE) the chain is on the lumenal side. A helical transmembrane segment spans residues 66-86 (TISAWIYGLGLCGLFVVSTVF). Residues 87–102 (HTISWKKSHLRMVEHC) lie on the Cytoplasmic side of the membrane. Residues 103–123 (LHMFDRMVIYFFIAASYAPWL) traverse the membrane as a helical segment. Residues 124–132 (NLRELGPWA) lie on the Lumenal side of the membrane. The helical transmembrane segment at 133–153 (SHMRWLVWIMASVGTIYVFFF) threads the bilayer. At 154-182 (HERTGSCVQFLRGEACPKAGTACLPARYK) the chain is on the cytoplasmic side. A helical transmembrane segment spans residues 183–203 (LVELLCYVVMGFFPALVILSM). At 204–205 (PN) the chain is on the lumenal side. A helical membrane pass occupies residues 206–226 (TEGIWELVTGGVFYCLGMVFF). Over 227–233 (KSDGRIP) the chain is Cytoplasmic. A helical membrane pass occupies residues 234 to 254 (FAHAIWHLFVAFGAGTHYYAI). The Lumenal portion of the chain corresponds to 255-270 (WRYLYLPSTLQTKVSK).

It belongs to the ADIPOR family. Shows restricted expression with highest levels in brain and testis.

Its subcellular location is the golgi apparatus membrane. The sequence is that of Monocyte to macrophage differentiation factor 2 from Homo sapiens (Human).